The primary structure comprises 367 residues: Glutamate 5-kinase (367 aa).

Residue lysine 10 participates in ATP binding. Serine 50, aspartate 137, and asparagine 149 together coordinate substrate. ATP-binding positions include 169-170 (TD) and 211-217 (TGGMSTK). One can recognise a PUA domain in the interval 275-353 (AGEITVDEGA…QQIDAILGYE (79 aa)).

This sequence belongs to the glutamate 5-kinase family.

The protein localises to the cytoplasm. The enzyme catalyses L-glutamate + ATP = L-glutamyl 5-phosphate + ADP. Its pathway is amino-acid biosynthesis; L-proline biosynthesis; L-glutamate 5-semialdehyde from L-glutamate: step 1/2. Functionally, catalyzes the transfer of a phosphate group to glutamate to form L-glutamate 5-phosphate. This chain is Glutamate 5-kinase, found in Salmonella arizonae (strain ATCC BAA-731 / CDC346-86 / RSK2980).